The sequence spans 467 residues: D-hydantoinase (467 aa).

H65, H67, and K156 together coordinate Zn(2+). The residue at position 156 (K156) is an N6-carboxylysine. Y161 serves as a coordination point for substrate. H189 and H245 together coordinate Zn(2+). S294 contributes to the substrate binding site. Residue D321 coordinates Zn(2+). N343 contacts substrate.

Belongs to the metallo-dependent hydrolases superfamily. Hydantoinase/dihydropyrimidinase family. As to quaternary structure, homotetramer. The cofactor is Zn(2+). In terms of processing, carboxylation allows a single lysine to coordinate two zinc ions.

Catalyzes the stereospecific hydrolysis of the cyclic amide bond of D-hydantoin derivatives. The sequence is that of D-hydantoinase (hyuA) from Streptomyces coelicolor (strain ATCC BAA-471 / A3(2) / M145).